Here is a 136-residue protein sequence, read N- to C-terminus: Blasticidin-S acetyltransferase (136 aa).

The N-acetyltransferase domain occupies 1–136; that stretch reads MLSLPRLQTV…ITSHLLVKEL (136 aa).

In terms of biological role, confers resistance to blasticidin S antibiotic. This is Blasticidin-S acetyltransferase (bls) from Streptomyces morookaense (Streptoverticillium morookaense).